Here is a 213-residue protein sequence, read N- to C-terminus: Uridine kinase (213 aa).

ATP is bound at residue 13-20 (GASASGKS).

This sequence belongs to the uridine kinase family.

It localises to the cytoplasm. It catalyses the reaction uridine + ATP = UMP + ADP + H(+). The catalysed reaction is cytidine + ATP = CMP + ADP + H(+). It participates in pyrimidine metabolism; CTP biosynthesis via salvage pathway; CTP from cytidine: step 1/3. The protein operates within pyrimidine metabolism; UMP biosynthesis via salvage pathway; UMP from uridine: step 1/1. The sequence is that of Uridine kinase from Haemophilus influenzae (strain PittEE).